An 809-amino-acid polypeptide reads, in one-letter code: Phospholipase D alpha 1 (809 aa).

The C2 domain occupies Met-1–Val-125. Residue Asp-186 coordinates Ca(2+). The PLD phosphodiesterase 1 domain maps to Thr-326–Arg-365. Catalysis depends on residues His-331, Lys-333, and Asp-338. Position 331 (His-331) interacts with a 1,2-diacyl-sn-glycero-3-phosphate. Positions 371 and 405 each coordinate Ca(2+). Positions 521 and 660 each coordinate a 1,2-diacyl-sn-glycero-3-phosphate. Residues Phe-655–Ser-682 enclose the PLD phosphodiesterase 2 domain. Active-site residues include His-660, Lys-662, and Asp-667. Glu-721 contributes to the Ca(2+) binding site.

The protein belongs to the phospholipase D family. C2-PLD subfamily. The cofactor is Ca(2+).

It carries out the reaction a 1,2-diacyl-sn-glycero-3-phosphocholine + H2O = a 1,2-diacyl-sn-glycero-3-phosphate + choline + H(+). In terms of biological role, hydrolyzes glycerol-phospholipids at the terminal phosphodiesteric bond. Plays an important role in various cellular processes. The chain is Phospholipase D alpha 1 (PLD1) from Vigna unguiculata (Cowpea).